We begin with the raw amino-acid sequence, 624 residues long: Chaperone protein HtpG (624 aa).

Residues 1–336 form an a; substrate-binding region; the sequence is MKGQETRGFQ…SSDLPLNVSR (336 aa). The interval 337 to 552 is b; the sequence is EILQDSTVTR…ADEMSTQMAK (216 aa). The interval 553 to 624 is c; that stretch reads LFAAAGQKVP…IRRMNQLLVS (72 aa).

Belongs to the heat shock protein 90 family. In terms of assembly, homodimer.

It localises to the cytoplasm. Its function is as follows. Molecular chaperone. Has ATPase activity. The sequence is that of Chaperone protein HtpG from Escherichia coli O139:H28 (strain E24377A / ETEC).